A 646-amino-acid polypeptide reads, in one-letter code: MNIRSNPDTTRPAVTTGALPSSRKMFSAPDAAPDLRVPLREILLSEGAGEPNLPVYDTSGPYTDPNVIIDVNAGLPRTRLAWVKERGGVEEYDGREIKPEDNGNVGASHAAAAFKAHHKPLRGIGDAPITQLEFARAGIITKEMIYVAERENLGRKKQLERAEAALADGEAFGASVPAFITPEFVREEIARGRAIIPSNINHAELEPMIIGRNFLVKINANIGNSAVTSSVEEEVDKMVWAIRWGADTVMDLSTGRNIHTTREWILRNSPVPIGTVPIYQALEKCDGDPVKLTWELYRDTLVEQCEQGVDYFTIHAGVRLPYIHLTADRVTGIVSRGGSIMAKWCLAHHKESFLYTHFEEICDLMRKYDVSFSLGDGLRPGSIADANDRAQFAELETLGELTQIAWKKGCQVMIEGPGHVPMHKIKINMDKQLKECGEAPFYTLGPLTTDIAPGYDHITSGIGAAMIGWFGCAMLCYVTPKEHLGLPNRDDVKTGVITYKIAAHAADLAKGHPAAQLRDDALSRARFDFRWQDQFNLGLDPDTAVAFHDETLPKDAHKVAHFCSMCGPKFCSMKITQDVRDYAATLGDNEKAALYPDTAPKANDAAGVPEPSYRDQGMKEMSARFKEMGGNVYLDAEKVKESNRVL.

Residues 1–13 (MNIRSNPDTTRPA) are compositionally biased toward polar residues. A disordered region spans residues 1 to 30 (MNIRSNPDTTRPAVTTGALPSSRKMFSAPD). Residues Asn221, Met250, Tyr279, His315, 335-337 (SRG), 376-379 (DGLR), and Glu415 each bind substrate. His419 contacts Zn(2+). Residue Tyr442 coordinates substrate. His483 is a binding site for Zn(2+). Residues Cys563, Cys566, and Cys571 each coordinate [4Fe-4S] cluster.

Belongs to the ThiC family. Homodimer. The cofactor is [4Fe-4S] cluster.

The enzyme catalyses 5-amino-1-(5-phospho-beta-D-ribosyl)imidazole + S-adenosyl-L-methionine = 4-amino-2-methyl-5-(phosphooxymethyl)pyrimidine + CO + 5'-deoxyadenosine + formate + L-methionine + 3 H(+). It functions in the pathway cofactor biosynthesis; thiamine diphosphate biosynthesis. Its function is as follows. Catalyzes the synthesis of the hydroxymethylpyrimidine phosphate (HMP-P) moiety of thiamine from aminoimidazole ribotide (AIR) in a radical S-adenosyl-L-methionine (SAM)-dependent reaction. The chain is Phosphomethylpyrimidine synthase from Nitrobacter winogradskyi (strain ATCC 25391 / DSM 10237 / CIP 104748 / NCIMB 11846 / Nb-255).